Reading from the N-terminus, the 86-residue chain is Acyl carrier protein (86 aa).

In terms of domain architecture, Carrier spans 10–85 (DKIEQKVIEM…DVIKYIKERQ (76 aa)). Position 45 is an O-(pantetheine 4'-phosphoryl)serine (Ser-45).

It belongs to the acyl carrier protein (ACP) family. In terms of processing, 4'-phosphopantetheine is transferred from CoA to a specific serine of apo-ACP by AcpS. This modification is essential for activity because fatty acids are bound in thioester linkage to the sulfhydryl of the prosthetic group.

Its subcellular location is the cytoplasm. Its pathway is lipid metabolism; fatty acid biosynthesis. Carrier of the growing fatty acid chain in fatty acid biosynthesis. In Rickettsia prowazekii (strain Madrid E), this protein is Acyl carrier protein.